Here is a 258-residue protein sequence, read N- to C-terminus: Spindlin-3 (258 aa).

The interval 1-23 is disordered; sequence MKTPFGKAAAGQRSRTGAGHGSV. 3 tudor-like domain regions span residues 50–99, 129–178, and 210–255; these read VGCR…LELH, VGKA…YQLL, and VGKQ…YDLV. Histone H3K4me3 and H3R8me2a binding stretches follow at residues Glu-138 and 246-248; that span reads DFH.

This sequence belongs to the SPIN/STSY family. As to quaternary structure, interacts with C11orf84/SPINDOC.

Functionally, exhibits H3K4me3-binding activity. The chain is Spindlin-3 (SPIN3) from Homo sapiens (Human).